A 260-amino-acid polypeptide reads, in one-letter code: Putative hydro-lyase Bmul_5125/BMULJ_03391 (260 aa).

It belongs to the D-glutamate cyclase family.

This chain is Putative hydro-lyase Bmul_5125/BMULJ_03391, found in Burkholderia multivorans (strain ATCC 17616 / 249).